A 275-amino-acid polypeptide reads, in one-letter code: MSNLQAVIEEAFERRADITPKTVDAATRAAIEEVIEGLDSGKFRVAEKIDGEWVTHQWLKKAVLLSFRINENEIIDGAETKYYDKVALKFADYSEERFAQEGFRVVPSATVRKGAYISKNTVLMPSYVNIGAYVGEGTMVDTWATVGSCAQIGKNVHLSGGVGIGGVLEPLQANPTIIGDNCFIGARSEVVEGVIVEDGCVISMGVFIGQSTKIYDRETGEIHYGRVPAGSVVVSGSLPSKDGKYSLYCAVIVKKVDAKTLGKVGINELLRSIEE.

2 residues coordinate substrate: Arg104 and Asp141.

Belongs to the transferase hexapeptide repeat family. In terms of assembly, homotrimer.

The protein localises to the cytoplasm. It catalyses the reaction (S)-2,3,4,5-tetrahydrodipicolinate + succinyl-CoA + H2O = (S)-2-succinylamino-6-oxoheptanedioate + CoA. It participates in amino-acid biosynthesis; L-lysine biosynthesis via DAP pathway; LL-2,6-diaminopimelate from (S)-tetrahydrodipicolinate (succinylase route): step 1/3. The protein is 2,3,4,5-tetrahydropyridine-2,6-dicarboxylate N-succinyltransferase of Actinobacillus succinogenes (strain ATCC 55618 / DSM 22257 / CCUG 43843 / 130Z).